The following is a 322-amino-acid chain: Undecaprenyl-phosphate 4-deoxy-4-formamido-L-arabinose transferase (322 aa).

At 1 to 235 the chain is on the cytoplasmic side; sequence MFEIHPVKKV…TCLTTTPLRM (235 aa). A helical transmembrane segment spans residues 236–256; that stretch reads LSLLGSIIAIGGFSIAVLLVI. Residues 257 to 269 lie on the Periplasmic side of the membrane; sequence LRLTFGPQWAAEG. The chain crosses the membrane as a helical span at residues 270 to 290; sequence VFMLFAVLFTFIGAQFIGMGL. Over 291–322 the chain is Cytoplasmic; sequence LGEYIGRIYTDVRARPRYFVQQVIRPSSKENE.

The protein belongs to the glycosyltransferase 2 family.

The protein localises to the cell inner membrane. The catalysed reaction is UDP-4-deoxy-4-formamido-beta-L-arabinose + di-trans,octa-cis-undecaprenyl phosphate = 4-deoxy-4-formamido-alpha-L-arabinopyranosyl di-trans,octa-cis-undecaprenyl phosphate + UDP. Its pathway is glycolipid biosynthesis; 4-amino-4-deoxy-alpha-L-arabinose undecaprenyl phosphate biosynthesis; 4-amino-4-deoxy-alpha-L-arabinose undecaprenyl phosphate from UDP-4-deoxy-4-formamido-beta-L-arabinose and undecaprenyl phosphate: step 1/2. It functions in the pathway bacterial outer membrane biogenesis; lipopolysaccharide biosynthesis. In terms of biological role, catalyzes the transfer of 4-deoxy-4-formamido-L-arabinose from UDP to undecaprenyl phosphate. The modified arabinose is attached to lipid A and is required for resistance to polymyxin and cationic antimicrobial peptides. This chain is Undecaprenyl-phosphate 4-deoxy-4-formamido-L-arabinose transferase, found in Escherichia coli O157:H7 (strain EC4115 / EHEC).